Here is a 671-residue protein sequence, read N- to C-terminus: cGMP-dependent protein kinase 1 (671 aa).

Residue Ser2 is modified to N-acetylserine. The stretch at 2-59 forms a coiled coil; the sequence is SELEEDFAKILMLKEERIKELEKRLSEKEEEIQELKRKLHKCQSVLPVPSTHIGPRTT. The tract at residues 2–102 is required for dimerization; that stretch reads SELEEDFAKI…LIKEAILDND (101 aa). A leucine-zipper region spans residues 9 to 44; the sequence is AKILMLKEERIKELEKRLSEKEEEIQELKRKLHKCQ. The tract at residues 50–75 is autoinhibitory domain; sequence PSTHIGPRTTRAQGISAEPQTYRSFH. Position 59 is a phosphothreonine; by autocatalysis (Thr59). Positions 103 to 220 are cGMP-binding, high affinity; that stretch reads FMKNLELSQI…EYMEFLKSVP (118 aa). Residues 167–170 and 177–178 each bind 3',5'-cyclic AMP; these read GELA and RT. 3',5'-cyclic GMP contacts are provided by residues 167–170, 177–178, Arg282, 291–294, 301–302, and Tyr336; these read GELA, RT, and GEKA. Residues 221–341 are cGMP-binding, low affinity; it reads TFQSLPEEIL…SNKAYEDAEA (121 aa). Residues 360–619 form the Protein kinase domain; that stretch reads FNIIDTLGVG…VKDIQKHKWF (260 aa). ATP contacts are provided by residues 366 to 374 and Lys390; that span reads LGVGGFGRV. The active-site Proton acceptor is Asp484. Thr515 is subject to Phosphothreonine. Positions 620–671 constitute an AGC-kinase C-terminal domain; the sequence is EGFNWEGLRKGTLTPPIIPSVASPTDTSNFDSFPEDNDEPPPDDNSGWDIDF. The segment at 635–671 is disordered; that stretch reads PIIPSVASPTDTSNFDSFPEDNDEPPPDDNSGWDIDF. The segment covering 652–661 has biased composition (acidic residues); sequence FPEDNDEPPP.

Belongs to the protein kinase superfamily. AGC Ser/Thr protein kinase family. cGMP subfamily. Isoform alpha: parallel homodimer or heterodimer and also heterotetramer. Interacts directly with PPP1R12A. Non-covalent dimer of dimer of PRKG1-PRKG1 and PPP1R12A-PPP1R12A. This interaction targets PRKG1 to stress fibers to mediate smooth muscle cell relaxation and vasodilation in responses to rises in cGMP. Isoform beta: antiparallel homodimer. Part of cGMP kinase signaling complex at least composed of ACTA2/alpha-actin, CNN1/calponin H1, PLN/phospholamban, PRKG1 and ITPR1. Interacts with IRAG1. Forms a stable complex with ITPR1, IRAG1, and isoform beta of PRKG1. Interacts with TRPC7 (via ankyrin repeat domain). Isoform alpha interacts with RGS2. Interacts with GTF2I. Post-translationally, autophosphorylation increases kinase activity. 65 kDa monomer is produced by proteolytic cleavage. In terms of tissue distribution, high concentrations are detected in various smooth muscle: lung, rumen, trachea, aorta, uterus and stomach. Isoform alpha is expressed predominantly in heart, cerebellum and lung, whereas the beta isoform is expressed in high concentrations in trachea, aorta, stomach and uterus.

Its subcellular location is the cytoplasm. The enzyme catalyses L-seryl-[protein] + ATP = O-phospho-L-seryl-[protein] + ADP + H(+). It carries out the reaction L-threonyl-[protein] + ATP = O-phospho-L-threonyl-[protein] + ADP + H(+). With respect to regulation, in the absence of cGMP, PRKG1 activity is suppressed by autoinhibitory contacts. Functionally, serine/threonine protein kinase that acts as a key mediator of the nitric oxide (NO)/cGMP signaling pathway. GMP binding activates PRKG1, which phosphorylates serines and threonines on many cellular proteins. Numerous protein targets for PRKG1 phosphorylation are implicated in modulating cellular calcium, but the contribution of each of these targets may vary substantially among cell types. Proteins that are phosphorylated by PRKG1 regulate platelet activation and adhesion, smooth muscle contraction, cardiac function, gene expression, feedback of the NO-signaling pathway, and other processes involved in several aspects of the CNS like axon guidance, hippocampal and cerebellar learning, circadian rhythm and nociception. Smooth muscle relaxation is mediated through lowering of intracellular free calcium, by desensitization of contractile proteins to calcium, and by decrease in the contractile state of smooth muscle or in platelet activation. Regulates intracellular calcium levels via several pathways: phosphorylates IRAG1 and inhibits IP3-induced Ca(2+) release from intracellular stores, phosphorylation of KCNMA1 (BKCa) channels decreases intracellular Ca(2+) levels, which leads to increased opening of this channel. PRKG1 phosphorylates the canonical transient receptor potential channel (TRPC) family which inactivates the associated inward calcium current. Another mode of action of NO/cGMP/PKGI signaling involves PKGI-mediated inactivation of the Ras homolog gene family member A (RhoA). Phosphorylation of RHOA by PRKG1 blocks the action of this protein in myriad processes: regulation of RHOA translocation; decreasing contraction; controlling vesicle trafficking, reduction of myosin light chain phosphorylation resulting in vasorelaxation. Activation of PRKG1 by NO signaling also alters gene expression in a number of tissues. In smooth muscle cells, increased cGMP and PRKG1 activity influence expression of smooth muscle-specific contractile proteins, levels of proteins in the NO/cGMP signaling pathway, down-regulation of the matrix proteins osteopontin and thrombospondin-1 to limit smooth muscle cell migration and phenotype. Regulates vasodilator-stimulated phosphoprotein (VASP) functions in platelets and smooth muscle. This Bos taurus (Bovine) protein is cGMP-dependent protein kinase 1 (PRKG1).